A 137-amino-acid chain; its full sequence is CCQPLVYRNKMTPLRVAVLLAGCWAIPVLISFLPIMQGWNNIGITDLIEKRKFHQNSNSTYCIFMVNKPYAITCSVVAFYIPFLLMVLAYWRIYVTAKEHAHQIQMLQRAGAPAEGRPPSADQHSTHRMRTETKAAK.

A helical membrane pass occupies residues 12 to 35 (TPLRVAVLLAGCWAIPVLISFLPI). A glycan (N-linked (GlcNAc...) asparagine) is linked at N58. A helical transmembrane segment spans residues 67 to 90 (NKPYAITCSVVAFYIPFLLMVLAY). Residues 112–137 (APAEGRPPSADQHSTHRMRTETKAAK) form a disordered region.

The protein belongs to the G-protein coupled receptor 1 family. Interacts (via C-terminus 330-346 AA) with GRK5; this interaction is promoted by 5-HT (serotonin).

The protein localises to the cell membrane. Its subcellular location is the endosome membrane. Functionally, G-protein coupled receptor for 5-hydroxytryptamine (serotonin), a biogenic hormone that functions as a neurotransmitter, a hormone and a mitogen. Ligand binding causes a conformation change that triggers signaling via guanine nucleotide-binding proteins (G proteins) and modulates the activity of downstream effectors. HTR4 is coupled to G(s) G alpha proteins and mediates activation of adenylate cyclase activity. This Sus scrofa (Pig) protein is 5-hydroxytryptamine receptor 4 (HTR4).